Consider the following 684-residue polypeptide: MSNTAVLNDLVALYDRPTEPMFRVKAKKSFKVPKEYVTDRFKNVAVEISNRFGEDDSETVTIDSVPLPDLADILTLGREENFSLFIPKHRNLSAKLINIFLQAENPKHLLSIACYAHDRVNPYLFIYALSVALIHRKDTKSLKIPNQIQTFPDKYFDSQVFSQGKEEMTVVPQGLRRPIEIPRDYTASDLEEEHRVAYWREDLGINLHHWHWHLVYPTDGGEIVTKKDRRGELFYYSHQQIVARYNFERFCNALKRVERLTDWQGPIKEAYFPKLDSLVAKRAYPARVQDMTMQDLDIPGQNIKVDVDDMIRWRDRIYRAIADGFITATNGSKMNLDDVTGIDILGNIMESSELSPNRQLYGNLHGFGHLMLSYIHDPRSHHLEPFGVIGDFTTAMRDPIFYRWHAFVDDVFQQFNGSLPRYTAEQLDYAGVQITDVNIKTPNAPDNEFRTFWQQSDVDMSRGVDFQDPGSVFVRFTHLNHEPFSYNITVNNTGNGVQEGTCRIFLAPATDERGNPWLFNNQRVMFVEMDRFKVTLRQGQNTITRNSTQSSVTIPFERTFRDLDTNRPAEGSEELDIFNFCGCGWPHHLLVPKGTPDGFKAQLFVMISNYADDKVEQDLSGSCNDAESYCGVRGGKYPDKRPMGYPFNRVARQGADTLQRFLTGNMIVQNCRIVHSDRTVRPRS.

A propeptide spans Met1 to Arg51 (removed by PPAF1). N-linked (GlcNAc...) asparagine glycosylation is found at Asn81 and Asn91. Cu cation is bound by residues His209, His213, and His238. N-linked (GlcNAc...) asparagine glycosylation occurs at Asn330. The Proton acceptor role is filled by Glu350. Cu cation is bound by residues His365, His369, and His405. N-linked (GlcNAc...) asparagine glycans are attached at residues Asn416, Asn487, Asn491, and Asn546. Cystine bridges form between Cys581-Cys623 and Cys583-Cys630.

The protein belongs to the tyrosinase family. As to quaternary structure, dimer. Might form a homodimer or a heterodimer with PPO1. Might interact with PPAF2 (via CLIP domain); the interaction might be required for PPO2 activity. The cofactor is Cu(2+). Post-translationally, precursor cleaved by PPAF1. Hemocytes.

The protein localises to the secreted. This is a copper-containing oxidase that functions in the formation of pigments such as melanins and other polyphenolic compounds. Catalyzes the oxidation of o-diphenols (N-acetyldopamine, 4-methylcatechol and dopamine). Cannot oxidize monophenols and p-phenols (L-tyrosine, tyramine, gentisic acid and hydroquinone). Binds to the surface of hemocytes and is involved in hemocyte melanization. Activation of the enzyme in response to bacterial lipopolysaccharides (LPS) suggests it may play a role in innate immunity. The sequence is that of Phenoloxidase 2 from Holotrichia diomphalia (Korean black chafer).